Consider the following 294-residue polypeptide: NAD kinase (294 aa).

D74 serves as the catalytic Proton acceptor. NAD(+)-binding positions include 74–75 (DG), 148–149 (NE), H159, R176, D178, 189–194 (TAYSLS), and Q249.

It belongs to the NAD kinase family. A divalent metal cation serves as cofactor.

The protein localises to the cytoplasm. The catalysed reaction is NAD(+) + ATP = ADP + NADP(+) + H(+). Functionally, involved in the regulation of the intracellular balance of NAD and NADP, and is a key enzyme in the biosynthesis of NADP. Catalyzes specifically the phosphorylation on 2'-hydroxyl of the adenosine moiety of NAD to yield NADP. This Vibrio vulnificus (strain CMCP6) protein is NAD kinase.